The primary structure comprises 222 residues: Protein GrpE (222 aa).

The disordered stretch occupies residues 1 to 82 (MSDFNKDEYL…KADDTLTPLG (82 aa)). Residues 20-71 (SGQAAPAAASADSAAAAAGATQEGAAQPAAAQSQENGDSAAADGADKAGAAD) are compositionally biased toward low complexity.

The protein belongs to the GrpE family. Homodimer.

The protein resides in the cytoplasm. Functionally, participates actively in the response to hyperosmotic and heat shock by preventing the aggregation of stress-denatured proteins, in association with DnaK and GrpE. It is the nucleotide exchange factor for DnaK and may function as a thermosensor. Unfolded proteins bind initially to DnaJ; upon interaction with the DnaJ-bound protein, DnaK hydrolyzes its bound ATP, resulting in the formation of a stable complex. GrpE releases ADP from DnaK; ATP binding to DnaK triggers the release of the substrate protein, thus completing the reaction cycle. Several rounds of ATP-dependent interactions between DnaJ, DnaK and GrpE are required for fully efficient folding. The chain is Protein GrpE from Bifidobacterium adolescentis (strain ATCC 15703 / DSM 20083 / NCTC 11814 / E194a).